A 201-amino-acid polypeptide reads, in one-letter code: 3-isopropylmalate dehydratase small subunit (201 aa).

This sequence belongs to the LeuD family. LeuD type 1 subfamily. Heterodimer of LeuC and LeuD.

It catalyses the reaction (2R,3S)-3-isopropylmalate = (2S)-2-isopropylmalate. It participates in amino-acid biosynthesis; L-leucine biosynthesis; L-leucine from 3-methyl-2-oxobutanoate: step 2/4. Its function is as follows. Catalyzes the isomerization between 2-isopropylmalate and 3-isopropylmalate, via the formation of 2-isopropylmaleate. The sequence is that of 3-isopropylmalate dehydratase small subunit from Shewanella sp. (strain ANA-3).